The primary structure comprises 184 residues: Adenine phosphoribosyltransferase (184 aa).

Belongs to the purine/pyrimidine phosphoribosyltransferase family. As to quaternary structure, homodimer.

It is found in the cytoplasm. It carries out the reaction AMP + diphosphate = 5-phospho-alpha-D-ribose 1-diphosphate + adenine. It functions in the pathway purine metabolism; AMP biosynthesis via salvage pathway; AMP from adenine: step 1/1. Its function is as follows. Catalyzes a salvage reaction resulting in the formation of AMP, that is energically less costly than de novo synthesis. In Acidovorax sp. (strain JS42), this protein is Adenine phosphoribosyltransferase.